The chain runs to 483 residues: 6-phosphogluconate dehydrogenase, decarboxylating (483 aa).

Residues 10–15 and 33–35 each bind NADP(+); these read GLAVMG and NRT. Lys-38 is modified (N6-acetyllysine). At Ser-57 the chain carries Phosphoserine. The residue at position 59 (Lys-59) is an N6-acetyllysine. Residues 75-77 and Asn-103 contribute to the NADP(+) site; that span reads VKA. Substrate contacts are provided by residues Asn-103 and 129–131; that span reads SGG. Ser-129 carries the post-translational modification Phosphoserine. The active-site Proton acceptor is the Lys-184. 187–188 is a substrate binding site; it reads HN. Glu-191 serves as the catalytic Proton donor. Substrate is bound by residues Tyr-192, Lys-261, Arg-288, Arg-447, and His-453. 478-481 lines the NADP(+) pocket; it reads SSSY.

The protein belongs to the 6-phosphogluconate dehydrogenase family. As to quaternary structure, homodimer.

The protein resides in the cytoplasm. The catalysed reaction is 6-phospho-D-gluconate + NADP(+) = D-ribulose 5-phosphate + CO2 + NADPH. It functions in the pathway carbohydrate degradation; pentose phosphate pathway; D-ribulose 5-phosphate from D-glucose 6-phosphate (oxidative stage): step 3/3. Its function is as follows. Catalyzes the oxidative decarboxylation of 6-phosphogluconate to ribulose 5-phosphate and CO(2), with concomitant reduction of NADP to NADPH. The protein is 6-phosphogluconate dehydrogenase, decarboxylating of Rattus norvegicus (Rat).